Reading from the N-terminus, the 95-residue chain is Protein GOLVEN 9 (95 aa).

A signal peptide spans 1–24 (MKKTSLKLMTLVLGFCFVIYLLQG). The propeptide occupies 25–73 (PRGGSRNGDLLIARKLISLEPIETKNAARSLKDSISTDLEEEVDRLMEH). The segment at 72–95 (EHEYPSPVKPRKRTPVHNGVRNRH) is disordered. Position 75 is a sulfotyrosine (Tyr75). A compositionally biased stretch (basic residues) spans 80-95 (KPRKRTPVHNGVRNRH). Pro86 is modified (hydroxyproline). The propeptide occupies 90 to 95 (GVRNRH).

It belongs to the RGF family. In terms of assembly, binds to LRR receptor-like serine/threonine-protein kinases to trigger their dimerization with SERK proteins and subsequent signaling. In terms of tissue distribution, expressed in roots.

Its subcellular location is the secreted. Its function is as follows. Signaling peptide (root growth factor) required during root gravitropism in a PIN2-traffic dependent manner. Regulates the pattern of root growth and lateral root development by modulating the length and the number of cortical cells in the root apical meristem (RAM), and the anticlinal asymmetric cell divisions in lateral root initiation cells. In Arabidopsis thaliana (Mouse-ear cress), this protein is Protein GOLVEN 9.